The following is a 305-amino-acid chain: Ribosomal RNA small subunit methyltransferase H (305 aa).

Residues 30–32 (GGH), D49, F74, D96, and Q103 each bind S-adenosyl-L-methionine.

This sequence belongs to the methyltransferase superfamily. RsmH family.

Its subcellular location is the cytoplasm. The enzyme catalyses cytidine(1402) in 16S rRNA + S-adenosyl-L-methionine = N(4)-methylcytidine(1402) in 16S rRNA + S-adenosyl-L-homocysteine + H(+). In terms of biological role, specifically methylates the N4 position of cytidine in position 1402 (C1402) of 16S rRNA. The protein is Ribosomal RNA small subunit methyltransferase H of Francisella tularensis subsp. mediasiatica (strain FSC147).